The sequence spans 569 residues: Arylsulfatase I (569 aa).

An N-terminal signal peptide occupies residues 1-23 (MHTLTGFSLVSLLSFGYLSWDWA). Ca(2+)-binding residues include Asp-55, Asp-56, and Cys-93. Catalysis depends on Cys-93, which acts as the Nucleophile. At Cys-93 the chain carries 3-oxoalanine (Cys). Lys-147 lines the substrate pocket. Residue His-149 is part of the active site. His-239 is a substrate binding site. Asn-276 and Asn-288 each carry an N-linked (GlcNAc...) asparagine glycan. Residues Asp-297 and Asn-298 each contribute to the Ca(2+) site. Substrate is bound at residue Lys-315. Residues Asn-466 and Asn-496 are each glycosylated (N-linked (GlcNAc...) asparagine). The disordered stretch occupies residues 510–539 (RAHPDFNGGAWGPWASDEEEEEEEGRARSF).

Belongs to the sulfatase family. Ca(2+) is required as a cofactor. In terms of processing, the oxidation of Cys-93 residue to 3-oxoalanine (also known as C(alpha)-formylglycine) by SUMF1/Sulfatase-modifying factor 1, seems critical for catalytic activity. In terms of tissue distribution, expressed in placenta, in embryonic stem cells, fetal eyes and lens.

It is found in the secreted. Its subcellular location is the endoplasmic reticulum. In terms of biological role, displays arylsulfatase activity at neutral pH, when co-expressed with SUMF1; arylsulfatase activity is measured in the secretion medium of retinal cell line, but no activity is recorded when measured in cell extracts. Lacks arylsulfatase activity. The sequence is that of Arylsulfatase I (ARSI) from Homo sapiens (Human).